The sequence spans 361 residues: 3-dehydroquinate synthase (361 aa).

NAD(+) is bound by residues 70–75 (DGEQHK), 104–108 (GVVGD), 128–129 (TT), lysine 141, and lysine 150. Residues glutamate 183, histidine 246, and histidine 263 each contribute to the Zn(2+) site.

It belongs to the sugar phosphate cyclases superfamily. Dehydroquinate synthase family. Co(2+) is required as a cofactor. The cofactor is Zn(2+). NAD(+) serves as cofactor.

The protein resides in the cytoplasm. The enzyme catalyses 7-phospho-2-dehydro-3-deoxy-D-arabino-heptonate = 3-dehydroquinate + phosphate. Its pathway is metabolic intermediate biosynthesis; chorismate biosynthesis; chorismate from D-erythrose 4-phosphate and phosphoenolpyruvate: step 2/7. Functionally, catalyzes the conversion of 3-deoxy-D-arabino-heptulosonate 7-phosphate (DAHP) to dehydroquinate (DHQ). In Teredinibacter turnerae (strain ATCC 39867 / T7901), this protein is 3-dehydroquinate synthase.